The following is a 59-amino-acid chain: Putative potassium channel toxin Ts25 (59 aa).

The first 22 residues, 1–22, serve as a signal peptide directing secretion; it reads MKAFYGILIIFILISMIHLSQQ. Disulfide bonds link Cys-29-Cys-50, Cys-35-Cys-55, and Cys-39-Cys-57.

It belongs to the short scorpion toxin superfamily. Potassium channel inhibitor family. Alpha-KTx 04 subfamily. Expressed by the venom gland.

It localises to the secreted. In terms of biological role, potently blocks Kv1.1/KCNA1 (85%), Kv1.2/KCNA2 (91%), Kv1.3/KCNA3 (89%), Kv1.6/KCNA6 (94%), and Shaker (97%). The protein is Putative potassium channel toxin Ts25 of Tityus serrulatus (Brazilian scorpion).